The primary structure comprises 120 residues: Large ribosomal subunit protein uL18 (120 aa).

It belongs to the universal ribosomal protein uL18 family. As to quaternary structure, part of the 50S ribosomal subunit; part of the 5S rRNA/L5/L18/L25 subcomplex. Contacts the 5S and 23S rRNAs.

Its function is as follows. This is one of the proteins that bind and probably mediate the attachment of the 5S RNA into the large ribosomal subunit, where it forms part of the central protuberance. This Bartonella tribocorum (strain CIP 105476 / IBS 506) protein is Large ribosomal subunit protein uL18.